Consider the following 116-residue polypeptide: Large ribosomal subunit protein bL19 (116 aa).

Belongs to the bacterial ribosomal protein bL19 family.

In terms of biological role, this protein is located at the 30S-50S ribosomal subunit interface and may play a role in the structure and function of the aminoacyl-tRNA binding site. The sequence is that of Large ribosomal subunit protein bL19 from Clostridioides difficile (strain 630) (Peptoclostridium difficile).